Consider the following 700-residue polypeptide: Long-chain-fatty-acid--CoA ligase 1 (700 aa).

The tract at residues 1-21 (MVAQYTVPVGKAANEHETAPR) is disordered. A Glycyl lysine isopeptide (Lys-Gly) (interchain with G-Cter in ubiquitin) cross-link involves residue Lys-189. 269–280 (YTSGSTGEPKGV) lines the ATP pocket. The FACS signature appears at 531-580 (DGWFKTGDIGEWEANGHLKIIDRKKNLVKTMNGEYIALEKLESVYRSNEY).

It belongs to the ATP-dependent AMP-binding enzyme family. Interacts with FAT1. Mg(2+) is required as a cofactor.

It is found in the lipid droplet. The protein resides in the cell membrane. It catalyses the reaction a long-chain fatty acid + ATP + CoA = a long-chain fatty acyl-CoA + AMP + diphosphate. The catalysed reaction is (9Z)-octadecenoate + ATP + CoA = (9Z)-octadecenoyl-CoA + AMP + diphosphate. It carries out the reaction hexadecanoate + ATP + CoA = hexadecanoyl-CoA + AMP + diphosphate. The enzyme catalyses (9Z)-hexadecenoate + ATP + CoA = (9Z)-hexadecenoyl-CoA + AMP + diphosphate. It catalyses the reaction tetradecanoate + ATP + CoA = tetradecanoyl-CoA + AMP + diphosphate. The catalysed reaction is (9Z)-tetradecenoate + ATP + CoA = (9Z)-tetradecenoyl-CoA + AMP + diphosphate. It carries out the reaction (9Z,12Z)-octadecadienoate + ATP + CoA = (9Z,12Z)-octadecadienoyl-CoA + AMP + diphosphate. The enzyme catalyses dodecanoate + ATP + CoA = dodecanoyl-CoA + AMP + diphosphate. It catalyses the reaction pentadecanoate + ATP + CoA = pentadecanoyl-CoA + AMP + diphosphate. The catalysed reaction is undecanoate + ATP + CoA = undecanoyl-CoA + AMP + diphosphate. It carries out the reaction heptadecanoate + ATP + CoA = heptadecanoyl-CoA + AMP + diphosphate. The enzyme catalyses octadecanoate + ATP + CoA = octadecanoyl-CoA + AMP + diphosphate. Functionally, activates long-chain fatty acids (LCFA) by esterification of the fatty acids into metabolically active CoA-thioesters for subsequent degradation or incorporation into phospholipids. Also facilitates the transport of LCFAs into the cell, either by active transport or by decreasing the intracellular LCFA concentration. It may supplement intracellular myristoyl-CoA pools from exogenous myristate. Preferentially acts on C12:0-C16:0 fatty acids with myristic and pentadecanic acid (C15:0) having the highest activities. Also involved in long-chain base (LCB) uptake of sphingolipids. In contrast ot LCFA uptake, LCB uptake does not require ATP, suggesting that the enzyme is directly involved in active LCB uptake. Involved in the sphingolipid-to-glycerolipid metabolic pathway, converting the sphingolipid metabolite hexadecenoic acid to hexadecenoyl-CoA, which is then further converted to glycerolipids. This chain is Long-chain-fatty-acid--CoA ligase 1 (FAA1), found in Saccharomyces cerevisiae (strain ATCC 204508 / S288c) (Baker's yeast).